The sequence spans 202 residues: Helix-loop-helix protein 10 (202 aa).

Disordered regions lie at residues 1–26 (MESS…NSEL) and 83–112 (QNKS…GKID). Over residues 17–26 (STGNHGNSEL) the composition is skewed to polar residues. Positions 121-134 (TRRYEANARERNRV) are basic motif. The bHLH domain occupies 121–172 (TRRYEANARERNRVQQLSKMFDQLRVCLPIEDDAKISKLATLKVASSYIGYL). Residues 135–172 (QQLSKMFDQLRVCLPIEDDAKISKLATLKVASSYIGYL) are helix-loop-helix motif.

As to quaternary structure, heterodimer with hlh-2. As to expression, expressed in intestine, neurons in head, body and tail, and in body hypodermis, and vulva. Expressed in neurons in the male-specific genital sensilla (simple sense organs) known as rays.

It localises to the nucleus. The protein localises to the cytoplasm. Its function is as follows. Probable transcription factor which binds the E box motif 5'-CA[TC][AG]TG-3'. In Caenorhabditis elegans, this protein is Helix-loop-helix protein 10.